We begin with the raw amino-acid sequence, 297 residues long: Non-structural protein VP10 (297 aa).

The polypeptide is Non-structural protein VP10 (Oryza latifolia (Indian wild rice)).